The sequence spans 212 residues: MGRSPCCEKAHMNKGAWTKEEDQRLIDYIRNHGEGSWRSLPKSVGLLRCGKSCRLRWINYLRPDLKRGNFTDGEEQIIVKLHSLFGNKWSLIAGKLPGRTDNEIKNYWNTHIKRKLLNRGIDPKTHGSIIEPKTTSFHPRNEDLKSTFPGSVKLKMETSCENCASTSGTTTDEDLRLSVDCDYRYDHLDKELNLDLTLGYSPTRFVGVGSCY.

HTH myb-type domains lie at 9-61 (KAHM…INYL) and 62-116 (RPDL…KRKL). 2 consecutive DNA-binding regions (H-T-H motif) follow at residues 37 to 61 (WRSL…INYL) and 89 to 112 (WSLI…NTHI).

It is found in the nucleus. In terms of biological role, transcription activator. This is Transcription factor MYB8 from Arabidopsis thaliana (Mouse-ear cress).